The sequence spans 445 residues: RNA pseudouridine synthase 2, chloroplastic (445 aa).

A chloroplast-targeting transit peptide spans 1-44 (MATTAAASPPAIATALSALLRRQRRRSSRCVGASHARCLAADAN). A disordered region spans residues 47-66 (AVAPSRRGGHGGTRLEEAVP). Residues 72–147 (SRIDAWISAR…IPLDIVYEDD (76 aa)) enclose the S4 RNA-binding domain. The active site involves D235.

This sequence belongs to the pseudouridine synthase RluA family.

The protein resides in the plastid. The protein localises to the chloroplast. It carries out the reaction a uridine in RNA = a pseudouridine in RNA. This Oryza sativa subsp. japonica (Rice) protein is RNA pseudouridine synthase 2, chloroplastic.